A 112-amino-acid polypeptide reads, in one-letter code: Macrodomain Ori protein (112 aa).

Positions 91-112 (FHTLSGGKPQVEGAEDYTDSDD) are disordered. The span at 103-112 (GAEDYTDSDD) shows a compositional bias: acidic residues.

The protein belongs to the MaoP family.

Its function is as follows. Involved in the organization of the Ori region of the chromosome into a macrodomain (MD). It constrains DNA mobility in the Ori macrodomain and limits long-distance DNA interactions with other chromosomal regions. The protein is Macrodomain Ori protein of Escherichia coli O157:H7.